The sequence spans 112 residues: Nitrogen regulatory protein P-II (112 aa).

Residue Tyr51 is modified to O-UMP-tyrosine.

Belongs to the P(II) protein family. Homotrimer.

Its function is as follows. In nitrogen-limiting conditions, when the ratio of Gln to 2-ketoglutarate decreases, P-II is uridylylated to P-II-UMP. P-II-UMP allows the deadenylation of glutamine synthetase (GS), thus activating the enzyme. Conversely, in nitrogen excess P-II is deuridylated and promotes the adenylation of GS. P-II indirectly controls the transcription of the GS gene (glnA). P-II prevents NR-II-catalyzed conversion of NR-I to NR-I-phosphate, the transcriptional activator of glnA. When P-II is uridylylated to P-II-UMP, these events are reversed. This chain is Nitrogen regulatory protein P-II (glnB), found in Rhizobium etli (strain ATCC 51251 / DSM 11541 / JCM 21823 / NBRC 15573 / CFN 42).